Consider the following 609-residue polypeptide: Glutamine--fructose-6-phosphate aminotransferase [isomerizing] (609 aa).

The Nucleophile; for GATase activity role is filled by Cys2. Residues Cys2–Arg218 form the Glutamine amidotransferase type-2 domain. SIS domains follow at residues Ala286 to Val426 and Leu458 to Pro599. Residue Lys604 is the For Fru-6P isomerization activity of the active site.

In terms of assembly, homodimer.

It is found in the cytoplasm. It carries out the reaction D-fructose 6-phosphate + L-glutamine = D-glucosamine 6-phosphate + L-glutamate. Catalyzes the first step in hexosamine metabolism, converting fructose-6P into glucosamine-6P using glutamine as a nitrogen source. The protein is Glutamine--fructose-6-phosphate aminotransferase [isomerizing] of Photorhabdus laumondii subsp. laumondii (strain DSM 15139 / CIP 105565 / TT01) (Photorhabdus luminescens subsp. laumondii).